A 215-amino-acid polypeptide reads, in one-letter code: Phosphoribosylglycinamide formyltransferase (215 aa).

(6R)-10-formyltetrahydrofolate-binding positions include Arg74, 99 to 102 (MRIL), and Asn116. The active-site Proton donor is the His118.

This sequence belongs to the GART family.

The enzyme catalyses N(1)-(5-phospho-beta-D-ribosyl)glycinamide + (6R)-10-formyltetrahydrofolate = N(2)-formyl-N(1)-(5-phospho-beta-D-ribosyl)glycinamide + (6S)-5,6,7,8-tetrahydrofolate + H(+). It functions in the pathway purine metabolism; IMP biosynthesis via de novo pathway; N(2)-formyl-N(1)-(5-phospho-D-ribosyl)glycinamide from N(1)-(5-phospho-D-ribosyl)glycinamide (10-formyl THF route): step 1/1. Functionally, catalyzes the transfer of a formyl group from 10-formyltetrahydrofolate to 5-phospho-ribosyl-glycinamide (GAR), producing 5-phospho-ribosyl-N-formylglycinamide (FGAR) and tetrahydrofolate. This Mycobacterium tuberculosis (strain CDC 1551 / Oshkosh) protein is Phosphoribosylglycinamide formyltransferase.